Here is an 828-residue protein sequence, read N- to C-terminus: Periplasmic nitrate reductase (828 aa).

The tat-type signal signal peptide spans 1–31; sequence MKLSRRSFMKANAVAAAAAAAGLSVPGVARA. The 57-residue stretch at 39-95 folds into the 4Fe-4S Mo/W bis-MGD-type domain; sequence IKWDKAPCRFCGTGCGVLVGTQQGRVVACQGDPDAPVNRGLNCIKGYFLPKIMYGKD. The [4Fe-4S] cluster site is built by cysteine 46, cysteine 49, cysteine 53, and cysteine 81. Mo-bis(molybdopterin guanine dinucleotide) is bound by residues lysine 83, glutamine 150, asparagine 175, cysteine 179, 212–219, 243–247, 262–264, methionine 372, glutamine 376, asparagine 482, 508–509, lysine 531, aspartate 558, and 718–727; these read WGSNMAEM, STFQH, QSD, SD, and TGRVLEHWHT. Residue phenylalanine 794 participates in substrate binding. The Mo-bis(molybdopterin guanine dinucleotide) site is built by asparagine 802 and lysine 819.

The protein belongs to the prokaryotic molybdopterin-containing oxidoreductase family. NasA/NapA/NarB subfamily. In terms of assembly, component of the periplasmic nitrate reductase NapAB complex composed of NapA and NapB. [4Fe-4S] cluster serves as cofactor. Requires Mo-bis(molybdopterin guanine dinucleotide) as cofactor. In terms of processing, predicted to be exported by the Tat system. The position of the signal peptide cleavage has not been experimentally proven.

The protein resides in the periplasm. It carries out the reaction 2 Fe(II)-[cytochrome] + nitrate + 2 H(+) = 2 Fe(III)-[cytochrome] + nitrite + H2O. In terms of biological role, catalytic subunit of the periplasmic nitrate reductase complex NapAB. Receives electrons from NapB and catalyzes the reduction of nitrate to nitrite. The sequence is that of Periplasmic nitrate reductase from Salmonella dublin (strain CT_02021853).